We begin with the raw amino-acid sequence, 349 residues long: Protein RecA (349 aa).

65-72 (GPESSGKT) contributes to the ATP binding site.

The protein belongs to the RecA family.

Its subcellular location is the cytoplasm. Functionally, can catalyze the hydrolysis of ATP in the presence of single-stranded DNA, the ATP-dependent uptake of single-stranded DNA by duplex DNA, and the ATP-dependent hybridization of homologous single-stranded DNAs. It interacts with LexA causing its activation and leading to its autocatalytic cleavage. In Enterococcus faecium (Streptococcus faecium), this protein is Protein RecA.